Reading from the N-terminus, the 449-residue chain is Probable phosphoglucosamine mutase (449 aa).

Ser101 acts as the Phosphoserine intermediate in catalysis. The Mg(2+) site is built by Ser101, Asp239, Asp241, and Asp243. Position 101 is a phosphoserine (Ser101).

Belongs to the phosphohexose mutase family. Mg(2+) serves as cofactor. In terms of processing, activated by phosphorylation.

It catalyses the reaction alpha-D-glucosamine 1-phosphate = D-glucosamine 6-phosphate. Catalyzes the conversion of glucosamine-6-phosphate to glucosamine-1-phosphate. This is Probable phosphoglucosamine mutase from Methanothermobacter thermautotrophicus (strain ATCC 29096 / DSM 1053 / JCM 10044 / NBRC 100330 / Delta H) (Methanobacterium thermoautotrophicum).